Here is a 1122-residue protein sequence, read N- to C-terminus: Cytosolic carboxypeptidase 4 (1122 aa).

The disordered stretch occupies residues 287-338; that stretch reads PGSTSSELPLNLTEEDFDDDGDEEMDKDSDVEAVKEDDDLETDLSKLSSKPG. Positions 299-313 are enriched in acidic residues; the sequence is TEEDFDDDGDEEMDK. The Peptidase M14 domain maps to 731 to 1021; it reads YPYTYSTLMT…MYCLGLLILE (291 aa). Residues His803, Glu806, and His900 each contribute to the Zn(2+) site. Residue Glu985 is the Proton donor/acceptor of the active site. Positions 1099-1122 are disordered; sequence CALNKDEEEEEKEEGTGWRRRSVT.

The protein belongs to the peptidase M14 family. As to quaternary structure, interacts with MYLK. Interacts with TCF4. Requires Zn(2+) as cofactor. As to expression, widely expressed at low level. Expressed in eye, muscle, pituitary, testis and to a lower extent in brain.

It is found in the cytoplasm. It localises to the cytosol. The enzyme catalyses (L-glutamyl)(n+1)-gamma-L-glutamyl-L-glutamyl-[protein] + H2O = (L-glutamyl)(n)-gamma-L-glutamyl-L-glutamyl-[protein] + L-glutamate. It carries out the reaction C-terminal L-alpha-aminoacyl-L-glutamyl-L-glutamyl-[tubulin] + H2O = C-terminal L-alpha-aminoacyl-L-glutamyl-[tubulin] + L-glutamate. Its function is as follows. Metallocarboxypeptidase that mediates deglutamylation of tubulin and non-tubulin target proteins. Catalyzes the removal of polyglutamate side chains present on the gamma-carboxyl group of glutamate residues within the C-terminal tail of tubulin protein. Specifically cleaves tubulin long-side-chains, while it is not able to remove the branching point glutamate. Also catalyzes the removal of polyglutamate residues from the carboxy-terminus of non-tubulin proteins such as MYLK. This chain is Cytosolic carboxypeptidase 4, found in Mus musculus (Mouse).